Consider the following 218-residue polypeptide: Uracil-DNA glycosylase (218 aa).

The Proton acceptor role is filled by D68.

Belongs to the uracil-DNA glycosylase (UDG) superfamily. UNG family. In terms of assembly, homodimer. Interacts with protein OPG148. Component of the Uracil-DNA glycosylase(UDG)-OPG148-polymerase complex; OPG148 and UDG form a heterodimeric processivity factor that associates with OPG71 to form the processive polymerase holoenzyme.

It catalyses the reaction Hydrolyzes single-stranded DNA or mismatched double-stranded DNA and polynucleotides, releasing free uracil.. Plays an essential role in viral replication as a component of the DNA polymerase processivity factor. Excises uracil residues from the DNA which can arise as a result of misincorporation of dUMP residues by DNA polymerase or due to deamination of cytosine. The polypeptide is Uracil-DNA glycosylase (OPG116) (Variola virus).